The sequence spans 244 residues: UPF0280 protein Msp_1322 (244 aa).

It belongs to the UPF0280 family.

This is UPF0280 protein Msp_1322 from Methanosphaera stadtmanae (strain ATCC 43021 / DSM 3091 / JCM 11832 / MCB-3).